We begin with the raw amino-acid sequence, 287 residues long: Phosphoribosylaminoimidazole-succinocarboxamide synthase (287 aa).

This sequence belongs to the SAICAR synthetase family.

The catalysed reaction is 5-amino-1-(5-phospho-D-ribosyl)imidazole-4-carboxylate + L-aspartate + ATP = (2S)-2-[5-amino-1-(5-phospho-beta-D-ribosyl)imidazole-4-carboxamido]succinate + ADP + phosphate + 2 H(+). The protein operates within purine metabolism; IMP biosynthesis via de novo pathway; 5-amino-1-(5-phospho-D-ribosyl)imidazole-4-carboxamide from 5-amino-1-(5-phospho-D-ribosyl)imidazole-4-carboxylate: step 1/2. The sequence is that of Phosphoribosylaminoimidazole-succinocarboxamide synthase from Neisseria meningitidis serogroup C (strain 053442).